The chain runs to 66 residues: Phylloseptin-B1 (66 aa).

An N-terminal signal peptide occupies residues 1-22 (MAFLKKSLFLVLFLGLVSLSIC). A propeptide spanning residues 23-46 (EEEKRETEEKEYDQGEDDKSEEKR) is cleaved from the precursor. Leu-65 bears the Leucine amide mark.

This sequence belongs to the frog skin active peptide (FSAP) family. Phylloseptin subfamily. Expressed by the skin glands.

It is found in the secreted. The protein resides in the target cell membrane. Its function is as follows. Antimicrobial peptide with activity against only a few strains of Gram-positive bacteria (S.aureus and B.megaterium). Acts in a synergistic effect in combination with Plasticin-B1 at doses that are not active alone. The polypeptide is Phylloseptin-B1 (Phyllomedusa bicolor (Two-colored leaf frog)).